A 599-amino-acid chain; its full sequence is Aspartate--tRNA(Asp/Asn) ligase (599 aa).

Glutamate 173 contributes to the L-aspartate binding site. An aspartate region spans residues 197–200; that stretch reads QLYK. Position 219 (arginine 219) interacts with L-aspartate. ATP is bound by residues 219–221 and glutamine 228; that span reads RDE. Position 451 (histidine 451) interacts with L-aspartate. Position 484 (glutamate 484) interacts with ATP. Arginine 491 serves as a coordination point for L-aspartate. 536 to 539 provides a ligand contact to ATP; sequence GLDR.

This sequence belongs to the class-II aminoacyl-tRNA synthetase family. Type 1 subfamily. Homodimer.

The protein localises to the cytoplasm. It catalyses the reaction tRNA(Asx) + L-aspartate + ATP = L-aspartyl-tRNA(Asx) + AMP + diphosphate. Its function is as follows. Aspartyl-tRNA synthetase with relaxed tRNA specificity since it is able to aspartylate not only its cognate tRNA(Asp) but also tRNA(Asn). Reaction proceeds in two steps: L-aspartate is first activated by ATP to form Asp-AMP and then transferred to the acceptor end of tRNA(Asp/Asn). The sequence is that of Aspartate--tRNA(Asp/Asn) ligase from Methylococcus capsulatus (strain ATCC 33009 / NCIMB 11132 / Bath).